A 594-amino-acid polypeptide reads, in one-letter code: Interactor of HORMAD1 protein 1 (594 aa).

Coiled coils occupy residues 109–135 (VGKS…SETL), 165–189 (QSIL…NDLV), and 219–245 (EMKS…CEQL). Residues 434-443 (VEMRGKDKKQ) are compositionally biased toward basic and acidic residues. The segment at 434–454 (VEMRGKDKKQQPRKAHRAHRG) is disordered. Basic residues predominate over residues 444–454 (QPRKAHRAHRG). Phosphoserine is present on residues Ser-588 and Ser-589.

Part of the MCD recombinosome complex, at least composed of IHO1, REC114 and MEI4. Interacts with REC114. Interacts with MEI4. Interacts with HORMAD1. Interacts with ANKRD31.

It localises to the chromosome. Functionally, required for DNA double-strand breaks (DSBs) formation in unsynapsed regions during meiotic recombination. Probably acts by forming a complex with MEI4 and REC114, which activates DSBs formation in unsynapsed regions, an essential step to ensure completion of synapsis. Not required for HORMAD1 functions in pairing-independent synaptonemal complex formation, ATR recruitment to unsynapsed axes, meiotic silencing of unsynapsed chromatin (MSUC) or meiotic surveillance. In Homo sapiens (Human), this protein is Interactor of HORMAD1 protein 1.